A 54-amino-acid polypeptide reads, in one-letter code: Toxin AnmTx Cj 1c-1 (54 aa).

Residues 1 to 7 form the signal peptide; that stretch reads MLNKRGV. Cystine bridges form between C9/C50, C11/C41, and C33/C51. E53 is modified (glutamic acid 1-amide).

It belongs to the sea anemone sodium channel inhibitory toxin family. Type I subfamily. In terms of processing, contains 3 disulfide bonds.

The protein resides in the secreted. Its subcellular location is the nematocyst. In vivo, induces marked paralysis on shrimps (C.multidentata) at 10-20 seconds after injection and a weak toxicity when injected into insect larvae (M.domestica). In Epiactis japonica (Sea anemone), this protein is Toxin AnmTx Cj 1c-1.